A 470-amino-acid chain; its full sequence is Tryptophan synthase beta chain 1, chloroplastic (470 aa).

The span at 1 to 10 (MAASGTSATF) shows a compositional bias: polar residues. Positions 1–24 (MAASGTSATFRASVSSAPSSSSQL) are disordered. Low complexity predominate over residues 12-22 (ASVSSAPSSSS). Lys-165 carries the post-translational modification N6-(pyridoxal phosphate)lysine.

It belongs to the TrpB family. Tetramer of two alpha and two beta chains. Requires pyridoxal 5'-phosphate as cofactor.

Its subcellular location is the plastid. The protein localises to the chloroplast. It catalyses the reaction (1S,2R)-1-C-(indol-3-yl)glycerol 3-phosphate + L-serine = D-glyceraldehyde 3-phosphate + L-tryptophan + H2O. The protein operates within amino-acid biosynthesis; L-tryptophan biosynthesis; L-tryptophan from chorismate: step 5/5. Functionally, the beta subunit is responsible for the synthesis of L-tryptophan from indole and L-serine. This Arabidopsis thaliana (Mouse-ear cress) protein is Tryptophan synthase beta chain 1, chloroplastic (TSB1).